Consider the following 257-residue polypeptide: MKDTSLALHFVSSGTKESLSAQKDLVERYGHVAAEDADIIVALGGDGTMLQALRDFMNTGKPIYGMNRGSVGFLMNEFVIENLPERILAAQMETIRPLVMVAETEDAPPVEALAINEVSLFRQSYQAARIRITIDGKVRLQELVCDGVMVATPAGSTAYNLSAQGPILPLEAPLLALTPVSPFRPRRWGGALLPKHVTVRMDLLETEKRPVNAVADNNEVKSVTSVTVREAPNSQVTILFDKNHSWDERILTEQFRH.

The active-site Proton acceptor is aspartate 46. NAD(+)-binding positions include 46–47 (DG), 116–117 (NE), aspartate 146, alanine 154, 157–162 (TAYNLS), and asparagine 218.

The protein belongs to the NAD kinase family. It depends on a divalent metal cation as a cofactor.

It localises to the cytoplasm. The enzyme catalyses NAD(+) + ATP = ADP + NADP(+) + H(+). Involved in the regulation of the intracellular balance of NAD and NADP, and is a key enzyme in the biosynthesis of NADP. Catalyzes specifically the phosphorylation on 2'-hydroxyl of the adenosine moiety of NAD to yield NADP. This is NAD kinase from Brucella suis biovar 1 (strain 1330).